The following is a 789-amino-acid chain: Zinc finger protein GLIS1 (789 aa).

Basic and acidic residues-rich tracts occupy residues 1 to 16 (MHCEVAEALSDKRPKE) and 63 to 74 (RAHDLLRPRSPR). Disordered stretches follow at residues 1 to 29 (MHCEVAEALSDKRPKEAPGAPGQGRGPVS), 53 to 93 (LLPR…YGHS), and 278 to 304 (PPLPGDLGGPPKRSRPGPASSDGQEGS). The span at 80 to 92 (KTGSGKVNGSYGH) shows a compositional bias: polar residues. A C2H2-type 1 zinc finger spans residues 366–391 (QACRWVDCCAAYEQQEELVRHIEKSH). The C2H2-type 2; atypical zinc finger occupies 400–427 (FTCFWAGCVRRYKPFNARYKLLIHMRVH). 3 C2H2-type zinc fingers span residues 433-457 (NKCMFEGCSKAFSRLENLKIHLRSH), 463-487 (YLCQHPGCQKAFSNSSDRAKHQRTH), and 493-517 (YACQIPGCSKRYTDPSSLRKHVKAH). Disordered stretches follow at residues 506–529 (DPSSLRKHVKAHSAKEQQVRKKLH) and 573–684 (VYPG…QGYQ). Residues 511–527 (RKHVKAHSAKEQQVRKK) carry the Bipartite nuclear localization signal motif. Residues 648–658 (ASQSQSPGGQS) show a composition bias toward low complexity.

This sequence belongs to the GLI C2H2-type zinc-finger protein family. Interacts with KLF4. Interacts with POU5F1 and/or POU5F1B. Interacts with SOX2. In the adult, expressed highly in placenta and kidney and at lower levels in the testis, brain, colon, brown fat tissue and thymus. During embryo development, expressed in the frontal nasal region, branchial arches, somites, vibrissal and hair follicles, limb buds, craniofacial regions, ventral part of the tail, intervertebral disks, teeth, eyes and kidney.

The protein localises to the nucleus. In terms of biological role, acts both as a repressor and an ctivator of transcription. Binds to the consensus sequence 5'-GACCACCCAC-3'. By controlling the expression of genes involved in cell differentiation inhibits the lineage commitment of multipotent cells. Prevents, for instance, the differentiation of multipotent mesenchymal cells into adipocyte and osteoblast. This is Zinc finger protein GLIS1 from Mus musculus (Mouse).